The sequence spans 503 residues: GMP synthase [glutamine-hydrolyzing] (503 aa).

The 189-residue stretch at 1 to 189 (MVLVLDFGSQ…FLELAGVKRD (189 aa)) folds into the Glutamine amidotransferase type-1 domain. Catalysis depends on Cys78, which acts as the Nucleophile. Active-site residues include His164 and Glu166. The GMPS ATP-PPase domain occupies 190-378 (WTPEHVLEEL…LGLPDTLRLR (189 aa)). 217-223 (SGGVDSS) serves as a coordination point for ATP.

As to quaternary structure, homodimer.

The enzyme catalyses XMP + L-glutamine + ATP + H2O = GMP + L-glutamate + AMP + diphosphate + 2 H(+). Its pathway is purine metabolism; GMP biosynthesis; GMP from XMP (L-Gln route): step 1/1. Functionally, catalyzes the synthesis of GMP from XMP. The polypeptide is GMP synthase [glutamine-hydrolyzing] (Thermus thermophilus (strain ATCC 27634 / DSM 579 / HB8)).